We begin with the raw amino-acid sequence, 860 residues long: MSENNTKLKYLCDLEEKGRRQCMESEILVDKKKFFITFPYPYMNGKLHLGHLFSISKADIFSYYKEMQGFNVLFPFGFHCTGMPISASAKKLKMELANEGEIDISVVNILKSLGFKLYCSGKCTNVECICQFTDPFHWCRTFPKYCKASLVKYDANIDWRRSFITTDVNPYYDSFVKYQFTKLKNCNYISFGKRYSIFCPVDNQICLDHDRRKGEGVKPIPIVLAILGNNILVPVQEKDLNTIIDNNVEIVTQKEIQWIQFSINNDVYVAEEDIYNNIKYQVENVYKIKTVTLDGLYPYIIYVNSNIRKSKINNKNKILTENIYNKLIADRHEKMELIKYDKFIVCYVPEDTVISRSGGKCTVALMDQWFLDYSNPEWKEKTKICLNKLTASKDTKEKLELALNWINKWGFSRNFGLGTKFPYDNSVLIDSLSDSTIYMAFYTVKHLLFKDLEGKEPLFPIKYMGYAFWEYVFGNSNEINFIDPNDLNAKKIVEDARSQFNYFYPIDLRVSGKDLINNHLIFFLMNHVAIFKENNWPKRIYTNGHLLLNGLKMSKSEGNFLSVDTALERFGTSATRMCLAICGDTNEDANFVESMANSFVLKLYTLSQNIFLISSNNQSVNVADYTLIDYYLISSIKINEEKTFTSYENIVYRDVIKYGFYNNLDTIETYEMFGGSNSNLKHWAYYNMMKQLYPVIPSLARYFLNEVLTDISIEFKNIINQQYISGIEYIKELIHKINKFTKHDAKKVNLTLIKHYPPWKELCMKKIDELKLIHKNNNDLKKIVLKECSQFIGENNRKKGILFCMDYLLYKEKYIINFDEELYTNTFKSIIEQETKKKIIILIKDDSTKGEPLCPEINSC.

The 'HIGH' region signature appears at 41-51 (PYMNGKLHLGH). The 'KMSKS' region signature appears at 552 to 556 (KMSKS). Lys-555 is an ATP binding site.

This sequence belongs to the class-I aminoacyl-tRNA synthetase family.

It is found in the cytoplasm. It carries out the reaction tRNA(Leu) + L-leucine + ATP = L-leucyl-tRNA(Leu) + AMP + diphosphate. The protein is Probable leucine--tRNA ligase, cytoplasmic of Enterocytozoon bieneusi (strain H348) (Microsporidian parasite).